The chain runs to 264 residues: Thymidylate synthase (264 aa).

A dUMP-binding site is contributed by R21. (6R)-5,10-methylene-5,6,7,8-tetrahydrofolate is bound at residue H51. DUMP is bound at residue 126–127 (RR). The Nucleophile role is filled by C146. Residues 166-169 (RSAD), N177, and 207-209 (HIY) contribute to the dUMP site. D169 is a binding site for (6R)-5,10-methylene-5,6,7,8-tetrahydrofolate. A263 lines the (6R)-5,10-methylene-5,6,7,8-tetrahydrofolate pocket.

The protein belongs to the thymidylate synthase family. Bacterial-type ThyA subfamily. Homodimer.

It is found in the cytoplasm. It catalyses the reaction dUMP + (6R)-5,10-methylene-5,6,7,8-tetrahydrofolate = 7,8-dihydrofolate + dTMP. It functions in the pathway pyrimidine metabolism; dTTP biosynthesis. Its function is as follows. Catalyzes the reductive methylation of 2'-deoxyuridine-5'-monophosphate (dUMP) to 2'-deoxythymidine-5'-monophosphate (dTMP) while utilizing 5,10-methylenetetrahydrofolate (mTHF) as the methyl donor and reductant in the reaction, yielding dihydrofolate (DHF) as a by-product. This enzymatic reaction provides an intracellular de novo source of dTMP, an essential precursor for DNA biosynthesis. This chain is Thymidylate synthase, found in Brucella anthropi (strain ATCC 49188 / DSM 6882 / CCUG 24695 / JCM 21032 / LMG 3331 / NBRC 15819 / NCTC 12168 / Alc 37) (Ochrobactrum anthropi).